The chain runs to 1438 residues: DNA-directed RNA polymerase subunit beta' (1438 aa).

Residues cysteine 70, cysteine 72, cysteine 85, and cysteine 88 each coordinate Zn(2+). The Mg(2+) site is built by aspartate 461, aspartate 463, and aspartate 465. Zn(2+)-binding residues include cysteine 821, cysteine 895, cysteine 902, and cysteine 905. The span at 1413 to 1427 (DAMAAAMGGDSAGGD) shows a compositional bias: low complexity. The segment at 1413–1438 (DAMAAAMGGDSAGGDTKPEAPEASEE) is disordered.

It belongs to the RNA polymerase beta' chain family. The RNAP catalytic core consists of 2 alpha, 1 beta, 1 beta' and 1 omega subunit. When a sigma factor is associated with the core the holoenzyme is formed, which can initiate transcription. It depends on Mg(2+) as a cofactor. Zn(2+) is required as a cofactor.

It carries out the reaction RNA(n) + a ribonucleoside 5'-triphosphate = RNA(n+1) + diphosphate. In terms of biological role, DNA-dependent RNA polymerase catalyzes the transcription of DNA into RNA using the four ribonucleoside triphosphates as substrates. The chain is DNA-directed RNA polymerase subunit beta' from Erythrobacter litoralis (strain HTCC2594).